An 890-amino-acid chain; its full sequence is tRNase Z TRZ3, mitochondrial (890 aa).

The N-terminal 44 residues, 1–44, are a transit peptide targeting the mitochondrion; the sequence is MINSMPYLHKNLRLLRLLSSKSSPFPLSLRPFSPRSFSLSTLFS. Residues 46–67 are disordered; it reads SSSSSSMENNEATNGSKSSSNS.

It belongs to the RNase Z family. In terms of assembly, homodimer. The cofactor is Zn(2+). It depends on Ca(2+) as a cofactor. Requires Mn(2+) as cofactor. Mg(2+) is required as a cofactor.

Its subcellular location is the mitochondrion. The protein resides in the nucleus. It catalyses the reaction Endonucleolytic cleavage of RNA, removing extra 3' nucleotides from tRNA precursor, generating 3' termini of tRNAs. A 3'-hydroxy group is left at the tRNA terminus and a 5'-phosphoryl group is left at the trailer molecule.. Functionally, zinc phosphodiesterase, which displays tRNA 3'-processing endonuclease activity. Involved in tRNA maturation, by removing a 3'-trailer from precursor tRNA. Can process the mitochondrial tRNA-like structures (t-elements). Involved in the processing of small nucleolar RNAs (snoRNAs). In Arabidopsis thaliana (Mouse-ear cress), this protein is tRNase Z TRZ3, mitochondrial.